The following is a 485-amino-acid chain: E3 ubiquitin-protein ligase TRIM68 (485 aa).

The segment at 16–61 (CPICMTFLREPVSISCGHTFCHSCLSGLWKLPGESQNLSYTCPLCR) adopts an RING-type zinc-finger fold. Residues 93-134 (LKTDVCDLHKEQLTMFCKEDDMVTCEACKQSPEHEAHSVVPI) form a B box-type zinc finger. Zn(2+)-binding residues include Cys98, His101, Cys120, and His126. A coiled-coil region spans residues 144-226 (KLQQALEHLR…EQEKGETASK (83 aa)). The B30.2/SPRY domain occupies 285 to 483 (LKTDCRVLGL…TPLTICTLGG (199 aa)).

Belongs to the TRIM/RBCC family. As to quaternary structure, interacts with AR/androgen receptor (via ligand-binding domain). Interacts with KAT5/TIP60. In terms of processing, auto-ubiquitinated.

Its subcellular location is the cytoplasm. It is found in the perinuclear region. The protein localises to the nucleus. It carries out the reaction S-ubiquitinyl-[E2 ubiquitin-conjugating enzyme]-L-cysteine + [acceptor protein]-L-lysine = [E2 ubiquitin-conjugating enzyme]-L-cysteine + N(6)-ubiquitinyl-[acceptor protein]-L-lysine.. It participates in protein modification; protein ubiquitination. Functionally, functions as a ubiquitin E3 ligase. Acts as a coactivator of androgen receptor (AR) depending on its ubiquitin ligase activity. This chain is E3 ubiquitin-protein ligase TRIM68 (Trim68), found in Mus musculus (Mouse).